We begin with the raw amino-acid sequence, 862 residues long: Cytosolic carboxypeptidase 2 (862 aa).

The 271-residue stretch at 359 to 629 (YPYTYTDLQC…HVCDTLLDFC (271 aa)) folds into the Peptidase M14 domain. Zn(2+)-binding residues include His425, Glu428, and His521. The active-site Proton donor/acceptor is the Glu593. 3 disordered regions span residues 669–692 (SDIPLSDIESSTSGSDSSLSDGPP), 704–728 (NQKTVLKNPKKKRLQTRKQRNEQYQ), and 750–836 (STLQ…PNWS). The segment covering 674–689 (SDIESSTSGSDSSLSD) has biased composition (low complexity). The span at 711–721 (NPKKKRLQTRK) shows a compositional bias: basic residues. A compositionally biased stretch (polar residues) spans 813-825 (ASCSPKRSTNSSL).

Belongs to the peptidase M14 family. As to quaternary structure, interacts with RARRES1, KIF11 and MAPRE1. Zn(2+) serves as cofactor. Widely expressed. Expressed in tissues with motile cilia such as testis, lung and trachea. Also detected in brain, eye, muscle, pancreas, intestine, stomach, pituitary, spleen, adrenal and kidney. Expressed in mitral and granular cells in brain.

Its subcellular location is the cytoplasm. It is found in the cytosol. The protein localises to the cytoskeleton. The protein resides in the microtubule organizing center. It localises to the centrosome. Its subcellular location is the centriole. It is found in the cilium basal body. It carries out the reaction (L-glutamyl)(n+1)-gamma-L-glutamyl-L-glutamyl-[protein] + H2O = (L-glutamyl)(n)-gamma-L-glutamyl-L-glutamyl-[protein] + L-glutamate. Inhibited by RARRES1. Functionally, metallocarboxypeptidase that mediates deglutamylation of tubulin and non-tubulin target proteins. Catalyzes the removal of polyglutamate side chains present on the gamma-carboxyl group of glutamate residues within the C-terminal tail of tubulin protein. Specifically cleaves tubulin long-side-chains, while it is not able to remove the branching point glutamate. Also catalyzes the removal of polyglutamate residues from the carboxy-terminus of non-tubulin proteins such as MYLK. The polypeptide is Cytosolic carboxypeptidase 2 (Mus musculus (Mouse)).